We begin with the raw amino-acid sequence, 303 residues long: uncharacterized protein (303 aa).

4 consecutive transmembrane segments (helical) span residues 55–77, 92–111, 208–230, and 240–257; these read FLVKVAVLCMFISMTLASFLFIQ, PAVFSIFTVICIFMTYTKII, FSLPHYMSLMFCGSIIVVYATSL, and IPHIFIFLLLIIFLKILI.

Its subcellular location is the cell membrane. This is an uncharacterized protein from Bacillus subtilis (strain 168).